The following is a 684-amino-acid chain: Cleavage and polyadenylation specificity factor 73 (684 aa).

H77, H79, D81, H82, H164, and D185 together coordinate Zn(2+). H402 serves as the catalytic Proton donor. Residue H424 participates in Zn(2+) binding.

It belongs to the metallo-beta-lactamase superfamily. RNA-metabolizing metallo-beta-lactamase-like family. CPSF3 subfamily. In terms of assembly, component of the cleavage and polyadenylation specificity factor (CPSF) complex, composed of at least Clp, Cpsf73, Cpsf100 and Cpsf160. Interacts with Sym and Cpsf100 forming a core cleavage factor required for both polyadenylated and histone mRNA processing. Interacts with Slbp and Lsm11. It depends on Zn(2+) as a cofactor.

It is found in the nucleus. In terms of biological role, component of the cleavage and polyadenylation specificity factor (CPSF) complex that plays a key role in pre-mRNA 3'-end formation, recognizing the AAUAAA signal sequence and interacting with poly(A) polymerase and other factors to bring about cleavage and poly(A) addition. Has endonuclease activity and functions as an mRNA 3'-end-processing endonuclease. Required for the cotranscriptional processing of 3'-ends of polyadenylated and histone pre-mRNA. In Drosophila melanogaster (Fruit fly), this protein is Cleavage and polyadenylation specificity factor 73 (Cpsf73).